The sequence spans 187 residues: MKQKLLELILTHAYRYSEQPFTLASGKKSRHYFNCKEITLVPDRLELLCKFIVERHLDESGILKPQAFGGLTMGADPICYGISLEFRKQDKNIYPLIVRKFSKDHGTNKLVEGAVHEVKSCVIVDDVITTGGSTIQAIRSMRDSGIVVVQGICILDRQEGGMDAILAEGVQMFPIFKKSDFGNLEHE.

5-phospho-alpha-D-ribose 1-diphosphate contacts are provided by residues Arg99, Lys100, Lys103, His105, and 125-133 (DDVITTGGS). Residues Thr129 and Arg157 each coordinate orotate.

The protein belongs to the purine/pyrimidine phosphoribosyltransferase family. PyrE subfamily. As to quaternary structure, homodimer. Mg(2+) serves as cofactor.

The catalysed reaction is orotidine 5'-phosphate + diphosphate = orotate + 5-phospho-alpha-D-ribose 1-diphosphate. It participates in pyrimidine metabolism; UMP biosynthesis via de novo pathway; UMP from orotate: step 1/2. Functionally, catalyzes the transfer of a ribosyl phosphate group from 5-phosphoribose 1-diphosphate to orotate, leading to the formation of orotidine monophosphate (OMP). The polypeptide is Orotate phosphoribosyltransferase (Leptospira borgpetersenii serovar Hardjo-bovis (strain JB197)).